Consider the following 491-residue polypeptide: MNYFNKLCFRKRINEIKKCRFMKENEFKNENKILKNKKIVIVGCGSQGLNQALNMRDSGLNISFALKKNSILRKNSSWLNATKNNFEVNDYESLIPNADLVINLTPDKQHENVVKELQKLMKKNSCLGYSHGFNIVECGEIIRKDITVVMVAPKCPGTEVREEFKRGFGVPTLIAVHTENDPKKIGLEIAKAWAFSTGGHRAGVLESSFIAEVKSDLMGEQTILCGLLQTASLICYEKLIKDKHNPSYAAKLIQYGWETITESLKHGGITLMMDRLSNPSKIKAFKISKKIKKILSPLFKKHMDDIISGSFSKEMMIDWHNNDKKLLNWREDTKKTPFEKNILSYSEKISEQEYYDHGTLMVSILKSGIELAFETMINTGIINESAYYESLHELPLIANTIARKKLYEMNIVISDTAEYGSYLFSEAAYPILKDFIMSLEKNVLGLSLPNTKIDNIELYKINEEIRNHPIEIVGKKLRKHMKEMKSICVAK.

The KARI N-terminal Rossmann domain maps to 16 to 207 (IKKCRFMKEN…GGHRAGVLES (192 aa)). NADP(+) contacts are provided by residues 44-47 (CGSQ), Lys-67, Ser-77, and 107-109 (DKQ). His-131 is a catalytic residue. Position 157 (Gly-157) interacts with NADP(+). KARI C-terminal knotted domains follow at residues 208–344 (SFIA…NILS) and 345–484 (YSEK…MKEM). 4 residues coordinate Mg(2+): Asp-216, Glu-220, Glu-389, and Glu-393. Position 414 (Ser-414) interacts with substrate.

This sequence belongs to the ketol-acid reductoisomerase family. Mg(2+) serves as cofactor.

The enzyme catalyses (2R)-2,3-dihydroxy-3-methylbutanoate + NADP(+) = (2S)-2-acetolactate + NADPH + H(+). It carries out the reaction (2R,3R)-2,3-dihydroxy-3-methylpentanoate + NADP(+) = (S)-2-ethyl-2-hydroxy-3-oxobutanoate + NADPH + H(+). It functions in the pathway amino-acid biosynthesis; L-isoleucine biosynthesis; L-isoleucine from 2-oxobutanoate: step 2/4. The protein operates within amino-acid biosynthesis; L-valine biosynthesis; L-valine from pyruvate: step 2/4. In terms of biological role, involved in the biosynthesis of branched-chain amino acids (BCAA). Catalyzes an alkyl-migration followed by a ketol-acid reduction of (S)-2-acetolactate (S2AL) to yield (R)-2,3-dihydroxy-isovalerate. In the isomerase reaction, S2AL is rearranged via a Mg-dependent methyl migration to produce 3-hydroxy-3-methyl-2-ketobutyrate (HMKB). In the reductase reaction, this 2-ketoacid undergoes a metal-dependent reduction by NADPH to yield (R)-2,3-dihydroxy-isovalerate. This chain is Ketol-acid reductoisomerase (NADP(+)), found in Buchnera aphidicola subsp. Schizaphis graminum (strain Sg).